A 737-amino-acid chain; its full sequence is Catalase-peroxidase (737 aa).

Residues 1–32 (MSKENMSNEGKCPFNHGAAGTNQSSGRGTSNK) form a disordered region. Positions 20–32 (GTNQSSGRGTSNK) are enriched in polar residues. Positions 103 to 226 (WHSAGTYRTA…LAAVQMGLIY (124 aa)) form a cross-link, tryptophyl-tyrosyl-methioninium (Trp-Tyr) (with M-252). His104 acts as the Proton acceptor in catalysis. Positions 226-252 (YVNPEGPEGKPDTLASARDIRDTFGRM) form a cross-link, tryptophyl-tyrosyl-methioninium (Tyr-Met) (with W-103). Heme b is bound at residue His267.

This sequence belongs to the peroxidase family. Peroxidase/catalase subfamily. As to quaternary structure, homodimer or homotetramer. Heme b serves as cofactor. In terms of processing, formation of the three residue Trp-Tyr-Met cross-link is important for the catalase, but not the peroxidase activity of the enzyme.

The enzyme catalyses H2O2 + AH2 = A + 2 H2O. It carries out the reaction 2 H2O2 = O2 + 2 H2O. Functionally, bifunctional enzyme with both catalase and broad-spectrum peroxidase activity. The polypeptide is Catalase-peroxidase (Marinomonas sp. (strain MWYL1)).